Consider the following 480-residue polypeptide: Alpha,alpha-trehalose-phosphate synthase [UDP-forming] 2 (480 aa).

Residues Tyr97 and Asp151 each contribute to the D-glucose 6-phosphate site. Arg288 and Lys293 together coordinate UDP. UDP-alpha-D-glucose-binding residues include Arg288 and Lys293. Arg326 provides a ligand contact to D-glucose 6-phosphate. 387–395 (DGMNLVSFE) lines the UDP-alpha-D-glucose pocket. 391–395 (LVSFE) is a binding site for UDP.

It belongs to the glycosyltransferase 20 family.

The enzyme catalyses D-glucose 6-phosphate + UDP-alpha-D-glucose = alpha,alpha-trehalose 6-phosphate + UDP + H(+). The protein operates within carbohydrate biosynthesis. Its function is as follows. Synthase catalytic subunit of the trehalose synthase complex that catalyzes the production of trehalose from glucose-6-phosphate and UDP-alpha-D-glucose in a two step process. The chain is Alpha,alpha-trehalose-phosphate synthase [UDP-forming] 2 from Aspergillus niger.